The sequence spans 143 residues: MVLSPADKTNVKAAWDKVGGHAGDYGAEALERMFLSFPTTKTYFPHFSDLSHGSAQVKAHGKKVGDALNNAVGHMDDLPTALSALSDLHAHKLRVDPVNFKLLSHCLLVTLACHHPAEFTPAVHASLDKFLANVSTVLVSKYR.

One can recognise a Globin domain in the interval 2 to 143 (VLSPADKTNV…VSTVLVSKYR (142 aa)). A Phosphoserine modification is found at Ser-4. N6-succinyllysine is present on Lys-8. Thr-9 bears the Phosphothreonine mark. Residue Lys-12 is modified to N6-succinyllysine. The residue at position 17 (Lys-17) is an N6-acetyllysine; alternate. Lys-17 is subject to N6-succinyllysine; alternate. Residue Tyr-25 is modified to Phosphotyrosine. Ser-36 carries the post-translational modification Phosphoserine. Position 41 is an N6-succinyllysine (Lys-41). Position 51 is a phosphoserine (Ser-51). His-60 is an O2 binding site. His-89 serves as a coordination point for heme b. Residue Ser-104 is modified to Phosphoserine. Thr-110 is modified (phosphothreonine). Residue Ser-126 is modified to Phosphoserine. Thr-136 is subject to Phosphothreonine. Residue Ser-140 is modified to Phosphoserine.

It belongs to the globin family. As to quaternary structure, heterotetramer of two alpha chains and two beta chains. As to expression, red blood cells.

Functionally, involved in oxygen transport from the lung to the various peripheral tissues. In terms of biological role, hemopressin acts as an antagonist peptide of the cannabinoid receptor CNR1. Hemopressin-binding efficiently blocks cannabinoid receptor CNR1 and subsequent signaling. This chain is Hemoglobin subunit alpha (HBA), found in Pipistrellus abramus (Japanese pipistrelle).